The sequence spans 332 residues: NADH-quinone oxidoreductase subunit H (332 aa).

9 consecutive transmembrane segments (helical) span residues 8–28 (IIECILKIIVVLLIFSALAGF), 44–66 (IGPNYVGPYGLLQVVADGIKLFA), 78–98 (PIFILAPSIAAITAFIAMAPI), 120–140 (VGILFVLAVSSCGIYAPLLAG), 157–177 (IQFLSFEVITILSLLAPLMII), 196–216 (WLIFKQPLAFGLFIIAAYVEL), 245–265 (MFFIGEYANMFATAFILSLVF), 274–294 (FIPGGIAILLKVCFFIFLFMW), and 312–332 (WKIMLPLALLNVLITGCILLF).

It belongs to the complex I subunit 1 family. As to quaternary structure, NDH-1 is composed of 14 different subunits. Subunits NuoA, H, J, K, L, M, N constitute the membrane sector of the complex.

It localises to the cell inner membrane. It carries out the reaction a quinone + NADH + 5 H(+)(in) = a quinol + NAD(+) + 4 H(+)(out). In terms of biological role, NDH-1 shuttles electrons from NADH, via FMN and iron-sulfur (Fe-S) centers, to quinones in the respiratory chain. The immediate electron acceptor for the enzyme in this species is believed to be ubiquinone. Couples the redox reaction to proton translocation (for every two electrons transferred, four hydrogen ions are translocated across the cytoplasmic membrane), and thus conserves the redox energy in a proton gradient. This subunit may bind ubiquinone. The sequence is that of NADH-quinone oxidoreductase subunit H from Helicobacter hepaticus (strain ATCC 51449 / 3B1).